A 113-amino-acid chain; its full sequence is Ubiquinol-cytochrome-c reductase complex assembly factor 4 (113 aa).

A signal peptide spans Met1–Ala18. Topologically, residues Ala19 to Lys72 are mitochondrial matrix. A helical transmembrane segment spans residues Val73 to Phe89. At Arg90–Lys113 the chain is on the mitochondrial intermembrane side.

The protein belongs to the UQCC4 family.

It is found in the mitochondrion inner membrane. In terms of biological role, required for the assembly and stability of the mitochondrial ubiquinol-cytochrome c reductase complex (complex III (CIII) or cytochrome b-c1 complex), a multisubunit transmembrane complex that is part of the mitochondrial electron transport chain (ETC) which drives oxidative phosphorylation. The protein is Ubiquinol-cytochrome-c reductase complex assembly factor 4 (uqcc4) of Xenopus tropicalis (Western clawed frog).